Consider the following 220-residue polypeptide: Thiopurine S-methyltransferase (220 aa).

S-adenosyl-L-methionine is bound by residues W10, L45, E66, and R123.

This sequence belongs to the class I-like SAM-binding methyltransferase superfamily. TPMT family.

It is found in the cytoplasm. It carries out the reaction S-adenosyl-L-methionine + a thiopurine = S-adenosyl-L-homocysteine + a thiopurine S-methylether.. This Pseudomonas syringae pv. syringae (strain B728a) protein is Thiopurine S-methyltransferase.